A 237-amino-acid polypeptide reads, in one-letter code: MIDNLIKRTPEINRLLENKRVTGVVTFVNPYSYYKIKEYNKISQLDYIYIDGILLLKLFNFVNGTKIKRHSFDYSSIAKTVFNYSIQNKMKIGLIGSKDYEIEQAVKNIRKKHPGIDISYFHSGYFSSLEEKSSVIDSVIKKSDIIICGLGTPAQEELALDIKIKSNEHLIFTCGGFFTQTASRADFYYPWIKRYNLMWLQRIVLYKHVRKRFFIDYPKFIVRFISENLMKIFTRSN.

Residue Glu101 is the Nucleophile of the active site.

Belongs to the glycosyltransferase 26 family. Mn(2+) serves as cofactor. The cofactor is Ni(2+). Pb(2+) is required as a cofactor.

The enzyme catalyses N-acetyl-alpha-D-glucosaminyl-di-trans,octa-cis-undecaprenyl diphosphate + UDP-alpha-D-galactose = beta-D-Gal-(1-&gt;4)-alpha-D-GlcNAc-di-trans,octa-cis-undecaprenyl diphosphate + UDP + H(+). It participates in bacterial outer membrane biogenesis; LPS O-antigen biosynthesis. Its function is as follows. Galactosyltransferase that adds one galactose residue in the beta-1-4 linkage to GlcNAc-alpha-pyrophosphate-lipid in the biosynthesis of the O-polysaccharide repeating unit of the O antigen. The chain is UDP-Gal:alpha-D-GlcNAc-diphosphoundecaprenol beta-1,4-galactosyltransferase (wfeD) from Shigella boydii.